The primary structure comprises 271 residues: Acetyl-coenzyme A carboxylase carboxyl transferase subunit alpha (271 aa).

Positions 1–247 (MSRELIRTAD…KKTILEALGE (247 aa)) constitute a CoA carboxyltransferase C-terminal domain.

It belongs to the AccA family. As to quaternary structure, acetyl-CoA carboxylase is a heterohexamer composed of biotin carboxyl carrier protein (AccB), biotin carboxylase (AccC) and two subunits each of ACCase subunit alpha (AccA) and ACCase subunit beta (AccD).

It localises to the cytoplasm. It carries out the reaction N(6)-carboxybiotinyl-L-lysyl-[protein] + acetyl-CoA = N(6)-biotinyl-L-lysyl-[protein] + malonyl-CoA. Its pathway is lipid metabolism; malonyl-CoA biosynthesis; malonyl-CoA from acetyl-CoA: step 1/1. Its function is as follows. Component of the acetyl coenzyme A carboxylase (ACC) complex. First, biotin carboxylase catalyzes the carboxylation of biotin on its carrier protein (BCCP) and then the CO(2) group is transferred by the carboxyltransferase to acetyl-CoA to form malonyl-CoA. This chain is Acetyl-coenzyme A carboxylase carboxyl transferase subunit alpha, found in Clostridium perfringens (strain 13 / Type A).